The primary structure comprises 510 residues: NAD(P)H-quinone oxidoreductase subunit 2 B, chloroplastic (510 aa).

Transmembrane regions (helical) follow at residues 24–44, 57–77, 99–119, 124–144, 150–170, 183–203, 229–249, 295–315, 323–343, 347–367, 395–415, 418–438, and 484–504; these read LLLF…GLIL, IPWL…ALLF, IFQF…VEYI, MAIT…MFLC, ITIF…SGYT, YLLM…WLYG, ISIA…PAPF, WHLL…LVAI, MLAY…IVGD, GYAS…GTFA, ALSS…AGFF, LHLF…IGLL, and MIVC…IIAI.

This sequence belongs to the complex I subunit 2 family. In terms of assembly, NDH is composed of at least 16 different subunits, 5 of which are encoded in the nucleus.

The protein localises to the plastid. It localises to the chloroplast thylakoid membrane. The catalysed reaction is a plastoquinone + NADH + (n+1) H(+)(in) = a plastoquinol + NAD(+) + n H(+)(out). It carries out the reaction a plastoquinone + NADPH + (n+1) H(+)(in) = a plastoquinol + NADP(+) + n H(+)(out). Its function is as follows. NDH shuttles electrons from NAD(P)H:plastoquinone, via FMN and iron-sulfur (Fe-S) centers, to quinones in the photosynthetic chain and possibly in a chloroplast respiratory chain. The immediate electron acceptor for the enzyme in this species is believed to be plastoquinone. Couples the redox reaction to proton translocation, and thus conserves the redox energy in a proton gradient. The sequence is that of NAD(P)H-quinone oxidoreductase subunit 2 B, chloroplastic from Ceratophyllum demersum (Rigid hornwort).